Consider the following 780-residue polypeptide: Zinc finger and SCAN domain-containing protein 10 (780 aa).

Residues 1–38 are disordered; that stretch reads MLGESVPAAVEQEQLGEVKLEEEEAVSPEDPRRPESRL. Basic and acidic residues predominate over residues 29–38; it reads EDPRRPESRL. The SCAN box domain maps to 56–126; it reads MGPRASLSRL…LLLEGIHREP (71 aa). 2 disordered regions span residues 153–237 and 255–324; these read GCAS…SRDQ and KAWP…GSLL. Phosphoserine occurs at positions 162 and 208. Positions 202-224 are enriched in polar residues; it reads SSKQPLSPGPQKTFQALQESSPQ. T268 carries the post-translational modification Phosphothreonine. The span at 268-280 shows a compositional bias: basic and acidic residues; sequence TPDKEEFKQEEPK. 14 consecutive C2H2-type zinc fingers follow at residues 347–370, 376–398, 404–426, 432–454, 476–498, 522–544, 550–572, 578–600, 606–628, 634–656, 662–684, 690–712, 724–746, and 752–774; these read FICADCGVSFPQLSRLKAHQLRSH, FLCLCCGKSFGRSSILKLHMRTH, HACHLCGHRFRQSSHLSKHLLTH, FLCAECGRGFQRRASLVQHLLAH, VLCSHCGQSFQRRSSLKRHLRIH, FVCSDCGKAFRRSEHLVAHRRVH, FSCQACGRSFTQSSQLVSHQRVH, YACPQCGKRFVRRASLARHLLTH, HHCTQCGKSFGQTQDLARHQRSH, CRCSECGEGFSQSAHLARHQRIH, HACDTCGHRFRNSSNLARHRRSH, YSCQTCGRSFRRNAHLRRHLATH, QECVECGKSFSRSCNLLRHLLVH, and YSCTQCGRSFSRNSHLLRHLRTH. N5-methylglutamine is present on Q483. Residues 492 to 520 are disordered; that stretch reads KRHLRIHARDKDRRSSEGSGSRRRDSDRR. Positions 498–520 are enriched in basic and acidic residues; that stretch reads HARDKDRRSSEGSGSRRRDSDRR.

In terms of assembly, interacts with POU5F1/OCT4 and SOX2. Methylated at Gln-483 by N6AMT1.

Its subcellular location is the nucleus. In terms of biological role, embryonic stem (ES) cell-specific transcription factor required to maintain ES cell pluripotency. Can both activate and /or repress expression of target genes, depending on the context. Specifically binds the 5'-[GA]CGCNNGCG[CT]-3' DNA consensus sequence. Regulates expression of POU5F1/OCT4, ZSCAN4 and ALYREF/THOC4. In Homo sapiens (Human), this protein is Zinc finger and SCAN domain-containing protein 10 (ZSCAN10).